The sequence spans 288 residues: Protein shisa-2 (288 aa).

Residues 1-23 form the signal peptide; the sequence is MWLEGSPLAVLAAVSFLLSVLAA. Over 24–110 the chain is Extracellular; it reads AQGSGEYCHG…DSTAVPIYVP (87 aa). A helical transmembrane segment spans residues 111 to 131; the sequence is FLIVGSVFVAFIIVGSLVAIC. The Cytoplasmic portion of the chain corresponds to 132-288; sequence CCRCLRPKQE…EQMMYPAVTV (157 aa). Positions 161–188 are enriched in low complexity; that stretch reads SSASTSRGSSSRQSSTAASSSSSANSGA. The interval 161–198 is disordered; it reads SSASTSRGSSSRQSSTAASSSSSANSGARPPPTRSQTN.

The protein belongs to the shisa family. As to quaternary structure, interacts with fzd8 and fgfr1.

The protein localises to the endoplasmic reticulum membrane. Plays an essential role in the maturation of presomitic mesoderm cells by individual attenuation of both fgf and wnt signaling. Inhibits both wnt and fgf signaling through the regulation of protein maturation and cell surface transportation of their receptors within the endoplasmic reticulum. The polypeptide is Protein shisa-2 (shisa2) (Xenopus laevis (African clawed frog)).